The sequence spans 236 residues: Purine nucleoside phosphorylase DeoD-type (236 aa).

Residue His-4 coordinates a purine D-ribonucleoside. Phosphate contacts are provided by residues Gly-20, Arg-24, Arg-43, and Arg-87–Thr-90. A purine D-ribonucleoside is bound by residues Glu-179 to Glu-181 and Ser-203 to Asp-204. Asp-204 functions as the Proton donor in the catalytic mechanism.

The protein belongs to the PNP/UDP phosphorylase family. As to quaternary structure, homohexamer; trimer of homodimers.

The catalysed reaction is a purine D-ribonucleoside + phosphate = a purine nucleobase + alpha-D-ribose 1-phosphate. It carries out the reaction a purine 2'-deoxy-D-ribonucleoside + phosphate = a purine nucleobase + 2-deoxy-alpha-D-ribose 1-phosphate. Functionally, catalyzes the reversible phosphorolytic breakdown of the N-glycosidic bond in the beta-(deoxy)ribonucleoside molecules, with the formation of the corresponding free purine bases and pentose-1-phosphate. The protein is Purine nucleoside phosphorylase DeoD-type of Streptococcus thermophilus (strain ATCC BAA-491 / LMD-9).